The following is a 270-amino-acid chain: Shikimate dehydrogenase (NADP(+)) (270 aa).

Residues 14 to 16 and threonine 60 each bind shikimate; that span reads SKS. Lysine 64 functions as the Proton acceptor in the catalytic mechanism. Glutamate 76 contributes to the NADP(+) binding site. Shikimate-binding residues include asparagine 85 and aspartate 101. Residues 125 to 129, 149 to 154, and methionine 213 each bind NADP(+); these read GAGGA and NRTASR. Tyrosine 215 is a shikimate binding site. Glycine 236 lines the NADP(+) pocket.

It belongs to the shikimate dehydrogenase family. As to quaternary structure, homodimer.

It catalyses the reaction shikimate + NADP(+) = 3-dehydroshikimate + NADPH + H(+). The protein operates within metabolic intermediate biosynthesis; chorismate biosynthesis; chorismate from D-erythrose 4-phosphate and phosphoenolpyruvate: step 4/7. In terms of biological role, involved in the biosynthesis of the chorismate, which leads to the biosynthesis of aromatic amino acids. Catalyzes the reversible NADPH linked reduction of 3-dehydroshikimate (DHSA) to yield shikimate (SA). The sequence is that of Shikimate dehydrogenase (NADP(+)) from Stutzerimonas stutzeri (strain A1501) (Pseudomonas stutzeri).